The primary structure comprises 117 residues: Large ribosomal subunit protein bL19 (117 aa).

This sequence belongs to the bacterial ribosomal protein bL19 family.

This protein is located at the 30S-50S ribosomal subunit interface and may play a role in the structure and function of the aminoacyl-tRNA binding site. This chain is Large ribosomal subunit protein bL19, found in Shewanella frigidimarina (strain NCIMB 400).